The chain runs to 573 residues: Squalene monooxygenase (573 aa).

Topologically, residues 1-19 are cytoplasmic; the sequence is MWTFLGIATFTYFYKKCGD. Positions 1–99 are interaction with MARCHF6; sequence MWTFLGIATF…EQLESKRRRK (99 aa). An intramembrane segment occupies 20–40; sequence VTLANKELLLCVLVFLSLGLV. Residues 41–573 lie on the Cytoplasmic side of the membrane; the sequence is LSYRCRHRNG…IYSEMKYLVH (533 aa). The tract at residues 61-72 is required for degradation in response to high membrane cholesterol levels; it reads QFAAFSDILSAL. Residues 100 to 573 form a sufficient for catalytic activity region; sequence EVNLSETTLT…IYSEMKYLVH (474 aa). FAD contacts are provided by residues 132-133, 152-153, R160, R233, V249, D407, and M420; these read VL and ER. The tract at residues 515–573 is hydrophobic; mediates interaction with membranes; the sequence is PLLLIRHFFSVAVYATYFCFKSEPWATKPRALFSSGAILYKACSIIFPLIYSEMKYLVH.

Belongs to the squalene monooxygenase family. In terms of assembly, interacts (via N-terminal domain) with MARCHF6. Interacts with SMIM22; this interaction modulates lipid droplet formation. It depends on FAD as a cofactor. Post-translationally, ubiquitinated by MARCHF6 in response to high cholesterol levels in intracellular membranes, leading to proteasomal degradation. As to expression, detected in lever (at protein level).

The protein resides in the microsome membrane. The protein localises to the endoplasmic reticulum membrane. It carries out the reaction squalene + reduced [NADPH--hemoprotein reductase] + O2 = (S)-2,3-epoxysqualene + oxidized [NADPH--hemoprotein reductase] + H2O + H(+). It functions in the pathway terpene metabolism; lanosterol biosynthesis; lanosterol from farnesyl diphosphate: step 2/3. With respect to regulation, inhibited by NB-598 ((E)N-ethyl-N-(6,6-dimethyl-2-hepten-4-ynyl)-3-[(3,3'-bi-thiophen-5-yl)methoxy]benzene-methanamine). Contrary to fungal enzymes, the mammalian enzyme is only slightly inhibited by terbinafine. Its function is as follows. Catalyzes the stereospecific oxidation of squalene to (S)-2,3-epoxysqualene, and is considered to be a rate-limiting enzyme in steroid biosynthesis. This chain is Squalene monooxygenase (Sqle), found in Rattus norvegicus (Rat).